Reading from the N-terminus, the 333-residue chain is Glycerol-3-phosphate dehydrogenase [NAD(P)+] (333 aa).

Residues serine 10, tryptophan 11, histidine 31, arginine 32, and lysine 105 each contribute to the NADPH site. Sn-glycerol 3-phosphate contacts are provided by lysine 105, glycine 136, and serine 138. Alanine 140 is a binding site for NADPH. Residues lysine 191, aspartate 244, serine 254, arginine 255, and asparagine 256 each coordinate sn-glycerol 3-phosphate. Lysine 191 functions as the Proton acceptor in the catalytic mechanism. An NADPH-binding site is contributed by arginine 255. Isoleucine 279 and glutamate 281 together coordinate NADPH.

This sequence belongs to the NAD-dependent glycerol-3-phosphate dehydrogenase family.

The protein resides in the cytoplasm. It catalyses the reaction sn-glycerol 3-phosphate + NAD(+) = dihydroxyacetone phosphate + NADH + H(+). The catalysed reaction is sn-glycerol 3-phosphate + NADP(+) = dihydroxyacetone phosphate + NADPH + H(+). It functions in the pathway membrane lipid metabolism; glycerophospholipid metabolism. Functionally, catalyzes the reduction of the glycolytic intermediate dihydroxyacetone phosphate (DHAP) to sn-glycerol 3-phosphate (G3P), the key precursor for phospholipid synthesis. The sequence is that of Glycerol-3-phosphate dehydrogenase [NAD(P)+] from Pelodictyon phaeoclathratiforme (strain DSM 5477 / BU-1).